A 155-amino-acid polypeptide reads, in one-letter code: Small ribosomal subunit protein bS16 (155 aa).

The interval 100–155 (EAGIPDPAPSTEEPAAVCEASAEMAGQPGEVEPAGAAAEPNSQEPEPEEEKPQVEA) is disordered. Over residues 124-143 (AGQPGEVEPAGAAAEPNSQE) the composition is skewed to low complexity.

The protein belongs to the bacterial ribosomal protein bS16 family.

This is Small ribosomal subunit protein bS16 from Synechococcus sp. (strain JA-3-3Ab) (Cyanobacteria bacterium Yellowstone A-Prime).